Here is a 261-residue protein sequence, read N- to C-terminus: Phosphatidylglycerol--prolipoprotein diacylglyceryl transferase (261 aa).

4 helical membrane-spanning segments follow: residues 13–33, 50–70, 86–106, and 112–132; these read LQIR…YWYI, VISW…ILFY, WNGG…MYIF, and IDVL…IFFG. R133 provides a ligand contact to a 1,2-diacyl-sn-glycero-3-phospho-(1'-sn-glycerol). 3 helical membrane passes run 169-189, 197-217, and 232-252; these read LYEA…LFFF, GMLS…IEFV, and ITMG…FIKL.

The protein belongs to the Lgt family.

The protein resides in the cell inner membrane. It catalyses the reaction L-cysteinyl-[prolipoprotein] + a 1,2-diacyl-sn-glycero-3-phospho-(1'-sn-glycerol) = an S-1,2-diacyl-sn-glyceryl-L-cysteinyl-[prolipoprotein] + sn-glycerol 1-phosphate + H(+). The protein operates within protein modification; lipoprotein biosynthesis (diacylglyceryl transfer). Its function is as follows. Catalyzes the transfer of the diacylglyceryl group from phosphatidylglycerol to the sulfhydryl group of the N-terminal cysteine of a prolipoprotein, the first step in the formation of mature lipoproteins. The chain is Phosphatidylglycerol--prolipoprotein diacylglyceryl transferase from Ehrlichia canis (strain Jake).